The following is a 216-amino-acid chain: Cyclo(L-leucyl-L-leucyl) synthase (216 aa).

The active-site Nucleophile is Ser-14. Substrate is bound by residues Asn-17, 155-159, and Tyr-179; that span reads YIFDE.

It belongs to the CDPS family.

It carries out the reaction 2 L-leucyl-tRNA(Leu) = cyclo(L-leucyl-L-leucyl) + 2 tRNA(Leu) + 2 H(+). Functionally, it uses activated amino acids in the form of aminoacyl-tRNAs (aa-tRNAs) as substrates to catalyze the ATP-independent formation of cyclodipeptides which are intermediates in diketopiperazine (DKP) biosynthetic pathways. Catalyzes the formation of cyclo(L-Leu-L-Leu) (cLL) from L-leucyl-tRNA(Leu). Can incorporate various nonpolar residues, such as L-leucine and L-methionine, into cyclodipeptides. The protein is Cyclo(L-leucyl-L-leucyl) synthase of Corynebacterium jeikeium (strain K411).